The chain runs to 130 residues: Probable 15 kDa heat shock protein (130 aa).

The region spanning 21–130 (ERVRILAPRV…LTKKIEVRSE (110 aa)) is the sHSP domain.

This sequence belongs to the small heat shock protein (HSP20) family.

This chain is Probable 15 kDa heat shock protein (hsp15), found in Leptospira interrogans serogroup Icterohaemorrhagiae serovar Lai (strain 56601).